A 461-amino-acid polypeptide reads, in one-letter code: MNKYVVILAAGKGTRMKSQLYKVLHKVCGKTMVEHVVNAAKGTNPDKIITVVGNGADSVKDVLAGQSDFAFQEQQLGTGDAVLAASDLLENLDGSTLVATGDTPLFTAETFNNLFKKHEESGNSATVLTAKAPNPFGYGRIIRDEDGNVLRIVEQKDGTPEELAVDEINTGVFCFDNKELFKALKQVGNDNAQGEYYLTDVLEIMRKAGHKVGAYEMPDFSESLGVNDRIALAQATKIMQRRINEEHMKNGVSFIDPDTAYIDSDVKIGNDTVIEGNVVIKGNTEIGSDCYITNSSRIVDSKIGNHVTITSSTLQEAQMDDNTDIGPNSHLRPKAVIRKGAHIGNFVEIKKAEIGENSKVGHLTYVGDATLGKDINIGCGTIFSNYDGVKKFHTNVGDHSFIGAGATIIAPVNIADHSFVAADSTITKDVARYDMAIARGRQTNKPDYWHKLPLSKDKEWE.

The pyrophosphorylase stretch occupies residues 1-229; that stretch reads MNKYVVILAA…FSESLGVNDR (229 aa). Residues 8–11, Lys22, Gln72, and 77–78 contribute to the UDP-N-acetyl-alpha-D-glucosamine site; these read LAAG and GT. Residue Asp102 coordinates Mg(2+). Gly139, Glu154, Asn169, and Asn227 together coordinate UDP-N-acetyl-alpha-D-glucosamine. Mg(2+) is bound at residue Asn227. The linker stretch occupies residues 230–250; the sequence is IALAQATKIMQRRINEEHMKN. The interval 251–461 is N-acetyltransferase; the sequence is GVSFIDPDTA…LPLSKDKEWE (211 aa). 2 residues coordinate UDP-N-acetyl-alpha-D-glucosamine: Arg332 and Lys350. The Proton acceptor role is filled by His362. Residues Tyr365 and Asn376 each coordinate UDP-N-acetyl-alpha-D-glucosamine. Residues 385-386, Ala422, and Arg439 each bind acetyl-CoA; that span reads NY.

The protein in the N-terminal section; belongs to the N-acetylglucosamine-1-phosphate uridyltransferase family. This sequence in the C-terminal section; belongs to the transferase hexapeptide repeat family. As to quaternary structure, homotrimer. Mg(2+) serves as cofactor.

The protein localises to the cytoplasm. The enzyme catalyses alpha-D-glucosamine 1-phosphate + acetyl-CoA = N-acetyl-alpha-D-glucosamine 1-phosphate + CoA + H(+). It catalyses the reaction N-acetyl-alpha-D-glucosamine 1-phosphate + UTP + H(+) = UDP-N-acetyl-alpha-D-glucosamine + diphosphate. It functions in the pathway nucleotide-sugar biosynthesis; UDP-N-acetyl-alpha-D-glucosamine biosynthesis; N-acetyl-alpha-D-glucosamine 1-phosphate from alpha-D-glucosamine 6-phosphate (route II): step 2/2. Its pathway is nucleotide-sugar biosynthesis; UDP-N-acetyl-alpha-D-glucosamine biosynthesis; UDP-N-acetyl-alpha-D-glucosamine from N-acetyl-alpha-D-glucosamine 1-phosphate: step 1/1. It participates in bacterial outer membrane biogenesis; LPS lipid A biosynthesis. Its function is as follows. Catalyzes the last two sequential reactions in the de novo biosynthetic pathway for UDP-N-acetylglucosamine (UDP-GlcNAc). The C-terminal domain catalyzes the transfer of acetyl group from acetyl coenzyme A to glucosamine-1-phosphate (GlcN-1-P) to produce N-acetylglucosamine-1-phosphate (GlcNAc-1-P), which is converted into UDP-GlcNAc by the transfer of uridine 5-monophosphate (from uridine 5-triphosphate), a reaction catalyzed by the N-terminal domain. This is Bifunctional protein GlmU from Lactobacillus gasseri (strain ATCC 33323 / DSM 20243 / BCRC 14619 / CIP 102991 / JCM 1131 / KCTC 3163 / NCIMB 11718 / NCTC 13722 / AM63).